Consider the following 556-residue polypeptide: 2-succinyl-5-enolpyruvyl-6-hydroxy-3-cyclohexene-1-carboxylate synthase (556 aa).

It belongs to the TPP enzyme family. MenD subfamily. In terms of assembly, homodimer. Mg(2+) serves as cofactor. The cofactor is Mn(2+). Thiamine diphosphate is required as a cofactor.

The enzyme catalyses isochorismate + 2-oxoglutarate + H(+) = 5-enolpyruvoyl-6-hydroxy-2-succinyl-cyclohex-3-ene-1-carboxylate + CO2. The protein operates within quinol/quinone metabolism; 1,4-dihydroxy-2-naphthoate biosynthesis; 1,4-dihydroxy-2-naphthoate from chorismate: step 2/7. It functions in the pathway quinol/quinone metabolism; menaquinone biosynthesis. Its function is as follows. Catalyzes the thiamine diphosphate-dependent decarboxylation of 2-oxoglutarate and the subsequent addition of the resulting succinic semialdehyde-thiamine pyrophosphate anion to isochorismate to yield 2-succinyl-5-enolpyruvyl-6-hydroxy-3-cyclohexene-1-carboxylate (SEPHCHC). This Salmonella gallinarum (strain 287/91 / NCTC 13346) protein is 2-succinyl-5-enolpyruvyl-6-hydroxy-3-cyclohexene-1-carboxylate synthase.